The following is a 262-amino-acid chain: Acyl-[acyl-carrier-protein]--UDP-N-acetylglucosamine O-acyltransferase (262 aa).

Belongs to the transferase hexapeptide repeat family. LpxA subfamily. In terms of assembly, homotrimer.

The protein resides in the cytoplasm. It catalyses the reaction a (3R)-hydroxyacyl-[ACP] + UDP-N-acetyl-alpha-D-glucosamine = a UDP-3-O-[(3R)-3-hydroxyacyl]-N-acetyl-alpha-D-glucosamine + holo-[ACP]. The protein operates within glycolipid biosynthesis; lipid IV(A) biosynthesis; lipid IV(A) from (3R)-3-hydroxytetradecanoyl-[acyl-carrier-protein] and UDP-N-acetyl-alpha-D-glucosamine: step 1/6. Functionally, involved in the biosynthesis of lipid A, a phosphorylated glycolipid that anchors the lipopolysaccharide to the outer membrane of the cell. The sequence is that of Acyl-[acyl-carrier-protein]--UDP-N-acetylglucosamine O-acyltransferase from Photorhabdus laumondii subsp. laumondii (strain DSM 15139 / CIP 105565 / TT01) (Photorhabdus luminescens subsp. laumondii).